Here is a 384-residue protein sequence, read N- to C-terminus: NAD-capped RNA hydrolase NPY1 (384 aa).

Zn(2+)-binding residues include C179, C182, C197, and C206. Residues 219–351 (PRTDPTVIIA…AGGYRVPFKN (133 aa)) enclose the Nudix hydrolase domain. Mg(2+) is bound by residues A256, E272, E276, and E322. Substrate is bound by residues 256-258 (AGF), E272, E276, and E322. A Nudix box motif is present at residues 257–278 (GFMEPSETIEEACIREIWEETG). A Microbody targeting signal motif is present at residues 378–380 (KTS).

It belongs to the Nudix hydrolase family. NudC subfamily. Homodimer. Mg(2+) is required as a cofactor. Requires Zn(2+) as cofactor.

The protein resides in the peroxisome. The catalysed reaction is a 5'-end NAD(+)-phospho-ribonucleoside in mRNA + H2O = a 5'-end phospho-adenosine-phospho-ribonucleoside in mRNA + beta-nicotinamide D-ribonucleotide + 2 H(+). The enzyme catalyses NAD(+) + H2O = beta-nicotinamide D-ribonucleotide + AMP + 2 H(+). It carries out the reaction NADH + H2O = reduced beta-nicotinamide D-ribonucleotide + AMP + 2 H(+). Functionally, mRNA decapping enzyme that specifically removes the nicotinamide adenine dinucleotide (NAD) cap from a subset of mRNAs by hydrolyzing the diphosphate linkage to produce nicotinamide mononucleotide (NMN) and 5' monophosphate mRNA. The NAD-cap is present at the 5'-end of some RNAs; in contrast to the canonical N7 methylguanosine (m7G) cap, the NAD cap promotes mRNA decay. Mediates the hydrolysis of some nucleoside diphosphate derivatives. The polypeptide is NAD-capped RNA hydrolase NPY1 (Saccharomyces cerevisiae (strain ATCC 204508 / S288c) (Baker's yeast)).